Consider the following 445-residue polypeptide: MPVGRSLSLDPNLLAQLQSHSPTLWLNPHQGMPLPDFAPTAADLADADARLRRCAGLLAELFAELRPSGGLIASPLQPAEPLKRAARAGHAQAGAWYVKRDDALPVAGSIKARGGFHEVLALAESIAERHGLAGADTDRRALASGAARARFARHTVMVGSTGNLGLSIGMLASALGFRTVAHMSADAKAWKKARLRTRGVEVVEHAGDYAKAVDAGRRQAAGMPCCHFVDDEGSRMLFLGYATAAAELAAQLAQAGRPVDARHPLFVHLPCGVGGAPGGIVYGLKALYGEHVHAFVAEPTASPCVLVQLAGDAAHPRSVYDIGLDNRTEADGLAVAQASPLAAALLRAQAAGAFTVDDRQLFAHLLDARERLGIDLEPSAAAAFGGPAWIAGSDAGRAYLRGRGIDPDAATHVIWATGGSLVPAQEHRRFQAHARAQRQVGGAGA.

Position 111 is an N6-(pyridoxal phosphate)lysine (K111).

Belongs to the serine/threonine dehydratase family. DsdA subfamily. It depends on pyridoxal 5'-phosphate as a cofactor.

The enzyme catalyses D-serine = pyruvate + NH4(+). The protein is Probable D-serine dehydratase of Burkholderia pseudomallei (strain 1710b).